The chain runs to 562 residues: Chaperonin GroEL 1 (562 aa).

ATP contacts are provided by residues 30 to 33 (TLGP), Lys51, 87 to 91 (DGTTT), Gly415, 478 to 480 (NAA), and Asp494.

It belongs to the chaperonin (HSP60) family. Forms a cylinder of 14 subunits composed of two heptameric rings stacked back-to-back. Interacts with the co-chaperonin GroES.

The protein resides in the cytoplasm. The catalysed reaction is ATP + H2O + a folded polypeptide = ADP + phosphate + an unfolded polypeptide.. Functionally, together with its co-chaperonin GroES, plays an essential role in assisting protein folding. The GroEL-GroES system forms a nano-cage that allows encapsulation of the non-native substrate proteins and provides a physical environment optimized to promote and accelerate protein folding. In Sorangium cellulosum (strain So ce56) (Polyangium cellulosum (strain So ce56)), this protein is Chaperonin GroEL 1.